Consider the following 37-residue polypeptide: Large ribosomal subunit protein bL36c (37 aa).

This sequence belongs to the bacterial ribosomal protein bL36 family.

Its subcellular location is the plastid. It is found in the chloroplast. This is Large ribosomal subunit protein bL36c (rpl36) from Chlorella vulgaris (Green alga).